Here is a 389-residue protein sequence, read N- to C-terminus: Na(+)/H(+) antiporter NhaA (389 aa).

11 helical membrane passes run 14 to 34, 59 to 79, 95 to 115, 124 to 144, 154 to 174, 177 to 197, 213 to 233, 257 to 277, 292 to 312, 328 to 348, and 363 to 383; these read AGGI…NSPL, LILW…GLEV, SLPT…YLLF, AGWA…MALL, VFLL…IALF, TDLS…LVGL, LILW…GVII, PWST…VYVG, IALG…YIAV, IAPV…IASL, and LGTL…LSKV.

Belongs to the NhaA Na(+)/H(+) (TC 2.A.33) antiporter family.

The protein localises to the cell inner membrane. It carries out the reaction Na(+)(in) + 2 H(+)(out) = Na(+)(out) + 2 H(+)(in). Na(+)/H(+) antiporter that extrudes sodium in exchange for external protons. The protein is Na(+)/H(+) antiporter NhaA of Shewanella baltica (strain OS155 / ATCC BAA-1091).